The following is a 549-amino-acid chain: Chaperonin GroEL (549 aa).

ATP is bound by residues 29–32 (TAGP), Lys50, 86–90 (DGTTT), Gly417, and Asp499.

This sequence belongs to the chaperonin (HSP60) family. As to quaternary structure, forms a cylinder of 14 subunits composed of two heptameric rings stacked back-to-back. Interacts with the co-chaperonin GroES.

The protein resides in the cytoplasm. It carries out the reaction ATP + H2O + a folded polypeptide = ADP + phosphate + an unfolded polypeptide.. In terms of biological role, together with its co-chaperonin GroES, plays an essential role in assisting protein folding. The GroEL-GroES system forms a nano-cage that allows encapsulation of the non-native substrate proteins and provides a physical environment optimized to promote and accelerate protein folding. The sequence is that of Chaperonin GroEL from Anaplasma marginale (strain Florida).